We begin with the raw amino-acid sequence, 109 residues long: FK506-binding protein (109 aa).

Positions 20-108 (GKEITVHYTG…IFEVELLKVY (89 aa)) constitute a PPIase FKBP-type domain.

The protein belongs to the FKBP-type PPIase family.

It catalyses the reaction [protein]-peptidylproline (omega=180) = [protein]-peptidylproline (omega=0). PPIases accelerate the folding of proteins. This chain is FK506-binding protein (fbp), found in Neisseria meningitidis serogroup C.